We begin with the raw amino-acid sequence, 321 residues long: Lipoyl synthase (321 aa).

7 residues coordinate [4Fe-4S] cluster: Cys68, Cys73, Cys79, Cys94, Cys98, Cys101, and Ser308. Residues 80–297 (FNHGTATFMI…KEQALAMGFT (218 aa)) enclose the Radical SAM core domain.

It belongs to the radical SAM superfamily. Lipoyl synthase family. It depends on [4Fe-4S] cluster as a cofactor.

It is found in the cytoplasm. It carries out the reaction [[Fe-S] cluster scaffold protein carrying a second [4Fe-4S](2+) cluster] + N(6)-octanoyl-L-lysyl-[protein] + 2 oxidized [2Fe-2S]-[ferredoxin] + 2 S-adenosyl-L-methionine + 4 H(+) = [[Fe-S] cluster scaffold protein] + N(6)-[(R)-dihydrolipoyl]-L-lysyl-[protein] + 4 Fe(3+) + 2 hydrogen sulfide + 2 5'-deoxyadenosine + 2 L-methionine + 2 reduced [2Fe-2S]-[ferredoxin]. It participates in protein modification; protein lipoylation via endogenous pathway; protein N(6)-(lipoyl)lysine from octanoyl-[acyl-carrier-protein]: step 2/2. In terms of biological role, catalyzes the radical-mediated insertion of two sulfur atoms into the C-6 and C-8 positions of the octanoyl moiety bound to the lipoyl domains of lipoate-dependent enzymes, thereby converting the octanoylated domains into lipoylated derivatives. The protein is Lipoyl synthase of Proteus mirabilis (strain HI4320).